A 95-amino-acid chain; its full sequence is MALEFKDKWLEQFYEDDKRHRLIPSSIENALFRKLEILDAAQAESDLRIPPGNRFEHLEGNLKGWCSIRVNKQYRLIFQWVDGVALNTYLDPHKY.

Its function is as follows. Toxic component of a type II toxin-antitoxin (TA) system. Inhibits translation by cleavage of mRNA. This is Toxin HigB-1 (higB-1) from Vibrio cholerae serotype O1 (strain ATCC 39315 / El Tor Inaba N16961).